The chain runs to 107 residues: Nucleoid-associated protein A1C_06705 (107 aa).

It belongs to the YbaB/EbfC family. Homodimer.

It is found in the cytoplasm. Its subcellular location is the nucleoid. In terms of biological role, binds to DNA and alters its conformation. May be involved in regulation of gene expression, nucleoid organization and DNA protection. This is Nucleoid-associated protein A1C_06705 from Rickettsia akari (strain Hartford).